Here is a 322-residue protein sequence, read N- to C-terminus: Putative T-box protein 11 (322 aa).

Positions 16–185 form a DNA-binding region, T-box; it reads LWRSCHEYDN…NNPYSTGSRK (170 aa). Residues 171 to 182 show a composition bias toward polar residues; that stretch reads TLKTNNNPYSTG. The segment at 171 to 214 is disordered; that stretch reads TLKTNNNPYSTGSRKDRRRERQSPVYSEGTSSEKSISPPPAKKI.

The protein resides in the nucleus. In Caenorhabditis elegans, this protein is Putative T-box protein 11 (tbx-11).